We begin with the raw amino-acid sequence, 475 residues long: Aspartyl/glutamyl-tRNA(Asn/Gln) amidotransferase subunit B (475 aa).

It belongs to the GatB/GatE family. GatB subfamily. In terms of assembly, heterotrimer of A, B and C subunits.

It carries out the reaction L-glutamyl-tRNA(Gln) + L-glutamine + ATP + H2O = L-glutaminyl-tRNA(Gln) + L-glutamate + ADP + phosphate + H(+). The enzyme catalyses L-aspartyl-tRNA(Asn) + L-glutamine + ATP + H2O = L-asparaginyl-tRNA(Asn) + L-glutamate + ADP + phosphate + 2 H(+). Functionally, allows the formation of correctly charged Asn-tRNA(Asn) or Gln-tRNA(Gln) through the transamidation of misacylated Asp-tRNA(Asn) or Glu-tRNA(Gln) in organisms which lack either or both of asparaginyl-tRNA or glutaminyl-tRNA synthetases. The reaction takes place in the presence of glutamine and ATP through an activated phospho-Asp-tRNA(Asn) or phospho-Glu-tRNA(Gln). This chain is Aspartyl/glutamyl-tRNA(Asn/Gln) amidotransferase subunit B, found in Staphylococcus epidermidis (strain ATCC 12228 / FDA PCI 1200).